We begin with the raw amino-acid sequence, 294 residues long: Lipoyl synthase (294 aa).

The [4Fe-4S] cluster site is built by C35, C40, C46, C61, C65, C68, and S275. The Radical SAM core domain maps to 46–264 (CWGGGTATVM…RDQGLALGFR (219 aa)).

The protein belongs to the radical SAM superfamily. Lipoyl synthase family. Requires [4Fe-4S] cluster as cofactor.

Its subcellular location is the cytoplasm. It carries out the reaction [[Fe-S] cluster scaffold protein carrying a second [4Fe-4S](2+) cluster] + N(6)-octanoyl-L-lysyl-[protein] + 2 oxidized [2Fe-2S]-[ferredoxin] + 2 S-adenosyl-L-methionine + 4 H(+) = [[Fe-S] cluster scaffold protein] + N(6)-[(R)-dihydrolipoyl]-L-lysyl-[protein] + 4 Fe(3+) + 2 hydrogen sulfide + 2 5'-deoxyadenosine + 2 L-methionine + 2 reduced [2Fe-2S]-[ferredoxin]. It functions in the pathway protein modification; protein lipoylation via endogenous pathway; protein N(6)-(lipoyl)lysine from octanoyl-[acyl-carrier-protein]: step 2/2. Functionally, catalyzes the radical-mediated insertion of two sulfur atoms into the C-6 and C-8 positions of the octanoyl moiety bound to the lipoyl domains of lipoate-dependent enzymes, thereby converting the octanoylated domains into lipoylated derivatives. The sequence is that of Lipoyl synthase from Anaeromyxobacter dehalogenans (strain 2CP-C).